The following is a 533-amino-acid chain: Beta-1,4 N-acetylgalactosaminyltransferase 1 (533 aa).

The Cytoplasmic segment spans residues 1–7 (MWLGRRA). A helical; Signal-anchor for type II membrane protein transmembrane segment spans residues 8–25 (LCALVLLLACASLGLLYA). At 26–533 (STRDAPGLRL…KHRLQCMTSQ (508 aa)) the chain is on the lumenal side. N-linked (GlcNAc...) asparagine glycans are attached at residues N79, N179, and N274. Cysteines 429 and 476 form a disulfide.

The protein belongs to the glycosyltransferase 2 family. Homodimer; disulfide-linked.

Its subcellular location is the golgi apparatus membrane. It catalyses the reaction a ganglioside GM3 (d18:1(4E)) + UDP-N-acetyl-alpha-D-galactosamine = a ganglioside GM2 (d18:1(4E)) + UDP + H(+). The catalysed reaction is a ganglioside GM3 + UDP-N-acetyl-alpha-D-galactosamine = a ganglioside GM2 + UDP + H(+). The enzyme catalyses a ganglioside GD3 + UDP-N-acetyl-alpha-D-galactosamine = a ganglioside GD2 + UDP + H(+). It carries out the reaction a ganglioside GD3 (d18:1(4E)) + UDP-N-acetyl-alpha-D-galactosamine = a ganglioside GD2 (d18:1(4E)) + UDP + H(+). It catalyses the reaction a beta-D-Gal-(1-&gt;4)-beta-D-Glc-(1&lt;-&gt;1)-Cer(d18:1(4E)) + UDP-N-acetyl-alpha-D-galactosamine = a ganglioside GA2 (d18:1(4E)) + UDP + H(+). The catalysed reaction is a ganglioside GD1a + UDP-N-acetyl-alpha-D-galactosamine = a ganglioside GalNAc-GD1a + UDP + H(+). The enzyme catalyses a ganglioside GT3 (d18:1(4E)) + UDP-N-acetyl-alpha-D-galactosamine = a ganglioside GT2 (d18:1(4E)) + UDP + H(+). It carries out the reaction a beta-D-galactosyl-(1-&gt;4)-beta-D-glucosyl-(1&lt;-&gt;1)-ceramide + UDP-N-acetyl-alpha-D-galactosamine = a ganglioside GA2 + UDP + H(+). It catalyses the reaction a neolactoside IV(3)-alpha-NeuGc-nLc4Cer + UDP-N-acetyl-alpha-D-galactosamine = a neolactoside IV(4)-beta-GalNAc-IV(3)-alpha-NeuGc-nLc4Cer + UDP + H(+). Its pathway is sphingolipid metabolism. Its function is as follows. Involved in the biosynthesis of gangliosides GM2, GD2, GT2 and GA2 from GM3, GD3, GT3 and GA3, respectively. This chain is Beta-1,4 N-acetylgalactosaminyltransferase 1, found in Homo sapiens (Human).